We begin with the raw amino-acid sequence, 178 residues long: Interleukin-1 receptor antagonist protein (178 aa).

A signal peptide spans 1 to 26 (MEICRGPYSHLISLLLILLFRSESAG). A disulfide bond links Cys92 and Cys142. N-linked (GlcNAc...) asparagine glycosylation is present at Asn110.

It belongs to the IL-1 family.

Its subcellular location is the secreted. Anti-inflammatory antagonist of interleukin-1 family of proinflammatory cytokines such as interleukin-1beta/IL1B and interleukin-1alpha/IL1A. Protects from immune dysregulation and uncontrolled systemic inflammation triggered by IL1 for a range of innate stimulatory agents such as pathogens. The sequence is that of Interleukin-1 receptor antagonist protein (Il1rn) from Rattus norvegicus (Rat).